A 403-amino-acid chain; its full sequence is D-mannonate dehydratase Caul1427 (403 aa).

Substrate contacts are provided by asparagine 38 and histidine 123. Residue tyrosine 160 is the Proton donor/acceptor of the active site. Aspartate 211 provides a ligand contact to Mg(2+). Histidine 213 functions as the Proton donor/acceptor in the catalytic mechanism. Residues glutamate 237 and glutamate 263 each contribute to the Mg(2+) site. Residues glutamate 263, arginine 284, histidine 313, aspartate 317, and glutamate 340 each contribute to the substrate site.

The protein belongs to the mandelate racemase/muconate lactonizing enzyme family. GalD subfamily. Mg(2+) serves as cofactor.

The enzyme catalyses D-mannonate = 2-dehydro-3-deoxy-D-gluconate + H2O. The protein operates within carbohydrate metabolism; pentose and glucuronate interconversion. Functionally, catalyzes the dehydration of D-mannonate. Has no detectable activity with a panel of 70 other acid sugars (in vitro). This Caulobacter sp. (strain K31) protein is D-mannonate dehydratase Caul1427.